The primary structure comprises 102 residues: ATP-dependent Clp protease adapter protein ClpS (102 aa).

This sequence belongs to the ClpS family. As to quaternary structure, binds to the N-terminal domain of the chaperone ClpA.

Its function is as follows. Involved in the modulation of the specificity of the ClpAP-mediated ATP-dependent protein degradation. The sequence is that of ATP-dependent Clp protease adapter protein ClpS from Shewanella denitrificans (strain OS217 / ATCC BAA-1090 / DSM 15013).